The chain runs to 31 residues: MSDIN-like toxin proprotein 4 (31 aa).

The propeptide occupies 1 to 10; sequence MSDINGTRLP. The segment at residues 11-16 is a cross-link (cyclopeptide (Trp-Pro)); the sequence is WLATCP. Positions 17–31 are excised as a propeptide; sequence CVGEDVNPTLSRGER.

The protein belongs to the MSDIN fungal toxin family. Processed by the macrocyclase-peptidase enzyme POPB to yield a toxic cyclic hexapeptide. POPB first removes 10 residues from the N-terminus. Conformational trapping of the remaining peptide forces the enzyme to release this intermediate rather than proceed to macrocyclization. The enzyme rebinds the remaining peptide in a different conformation and catalyzes macrocyclization of the N-terminal 6 residues.

Functionally, probable toxin that belongs to the MSDIN-like toxin family responsible for a large number of food poisoning cases and deaths. In Amanita phalloides (Death cap), this protein is MSDIN-like toxin proprotein 4.